We begin with the raw amino-acid sequence, 290 residues long: 4-hydroxybenzoate octaprenyltransferase (290 aa).

7 consecutive transmembrane segments (helical) span residues 33-53, 99-119, 141-161, 163-183, 213-233, 237-257, and 268-288; these read LWAL…AVFV, LFVV…TMTI, LPQV…FAAV, ESVP…AVAY, FIIG…GWLN, WGYY…QKLI, and AFMN…MSYW.

The protein belongs to the UbiA prenyltransferase family. The cofactor is Mg(2+).

The protein resides in the cell inner membrane. The enzyme catalyses all-trans-octaprenyl diphosphate + 4-hydroxybenzoate = 4-hydroxy-3-(all-trans-octaprenyl)benzoate + diphosphate. The protein operates within cofactor biosynthesis; ubiquinone biosynthesis. In terms of biological role, catalyzes the prenylation of para-hydroxybenzoate (PHB) with an all-trans polyprenyl group. Mediates the second step in the final reaction sequence of ubiquinone-8 (UQ-8) biosynthesis, which is the condensation of the polyisoprenoid side chain with PHB, generating the first membrane-bound Q intermediate 3-octaprenyl-4-hydroxybenzoate. The sequence is that of 4-hydroxybenzoate octaprenyltransferase from Escherichia fergusonii (strain ATCC 35469 / DSM 13698 / CCUG 18766 / IAM 14443 / JCM 21226 / LMG 7866 / NBRC 102419 / NCTC 12128 / CDC 0568-73).